The sequence spans 575 residues: Transcription factor COE2 (575 aa).

Residues 62–65 are interaction with DNA; that stretch reads RKSN. Residues 150-169 form a C5-type zinc finger; that stretch reads CRVLLTHEVMCSRCCEKKSC. Interaction with DNA regions lie at residues 196–203 and 235–238; these read NCLKTAGN and NNSK. In terms of domain architecture, IPT/TIG spans 253-336; it reads PCIKAISPSE…KGAPGRFIYT (84 aa). Positions 441–453 are enriched in polar residues; it reads STQGNNQGYIRNT. The tract at residues 441 to 479 is disordered; that stretch reads STQGNNQGYIRNTSSISPRGYSSSSTPQQSNYSTSSNSM. Residues 454–479 show a composition bias toward low complexity; the sequence is SSISPRGYSSSSTPQQSNYSTSSNSM.

The protein belongs to the COE family. Forms either a homodimer or a heterodimer with a related family member. Interacts with SIX1. In terms of tissue distribution, in adult expressed in olfactory epithelium and at a much lower level in Purkinje cells of the cerebellum. In embryo expressed in epithalamus, in cells near the ventricular zone of mesencephalon and on the ventral surface of rhombencephalon, in the developing vomeronasal organ, at a lower level in developing spinal cord. Not expressed in developing retina, inner ear, dorsal root ganglia, trigeminal ganglia and glossopharyngeal ganglia.

The protein resides in the nucleus. Its function is as follows. Transcription factor that, in osteoblasts, activates the decoy receptor for RANKL, TNFRSF11B, which in turn regulates osteoclast differentiation. Acts in synergy with the Wnt-responsive LEF1/CTNNB1 pathway. Recognizes variations of the palindromic sequence 5'-ATTCCCNNGGGAATT-3'. This Mus musculus (Mouse) protein is Transcription factor COE2 (Ebf2).